We begin with the raw amino-acid sequence, 252 residues long: Hydroxyacylglutathione hydrolase (252 aa).

7 residues coordinate Zn(2+): His54, His56, Asp58, His59, His111, Asp128, and His166.

The protein belongs to the metallo-beta-lactamase superfamily. Glyoxalase II family. As to quaternary structure, monomer. The cofactor is Zn(2+).

The enzyme catalyses an S-(2-hydroxyacyl)glutathione + H2O = a 2-hydroxy carboxylate + glutathione + H(+). It participates in secondary metabolite metabolism; methylglyoxal degradation; (R)-lactate from methylglyoxal: step 2/2. Functionally, thiolesterase that catalyzes the hydrolysis of S-D-lactoyl-glutathione to form glutathione and D-lactic acid. The protein is Hydroxyacylglutathione hydrolase of Vibrio cholerae serotype O1 (strain ATCC 39541 / Classical Ogawa 395 / O395).